Here is a 347-residue protein sequence, read N- to C-terminus: Protein YIPF3 (347 aa).

The disordered stretch occupies residues 1-31 (MATPAAPASGVRNGAGPEWGGFEENIQGGGS). The residue at position 2 (alanine 2) is an N-acetylalanine; in Protein YIPF3, N-terminally processed. At 2-145 (ATPAAPASGV…PIKMVNFPQK (144 aa)) the chain is on the cytoplasmic side. The chain crosses the membrane as a helical span at residues 146-166 (VAGELYGPLMLVFTLVAILLH). Topologically, residues 167–184 (GMKTSDTIIREGTLMGTA) are lumenal. Residues 185 to 205 (IGTCFGYWLGVSSFIYFLAYL) traverse the membrane as a helical segment. The Cytoplasmic portion of the chain corresponds to 206 to 211 (CNAQIT). The chain crosses the membrane as a helical span at residues 212–234 (MLQMLALLGYGLFGHCIVLFITY). Residues 235–237 (NIH) lie on the Lumenal side of the membrane. Residues 238-260 (LHALFYLFWLLVGGLSTLRMVAV) form a helical membrane-spanning segment. At 261–271 (LVSRTVGPTQR) the chain is on the cytoplasmic side. Residues 272-292 (LLLCGTLAALHMLFLLYLHFA) form a helical membrane-spanning segment. The Lumenal portion of the chain corresponds to 293–347 (YHKVVEGILDTLEGPNIPPMQRVPRDIPAVLPAARLPVAVINATAKAIAVTLQSH). An N-linked (GlcNAc...) asparagine glycan is attached at asparagine 334.

The protein belongs to the YIP1 family. In terms of assembly, interacts with YIPF4 and YIPF5. As to expression, expressed by splenocytes (at protein level).

The protein localises to the cell membrane. The protein resides in the golgi apparatus. It is found in the cis-Golgi network membrane. It localises to the cytoplasm. Functionally, involved in the maintenance of the Golgi structure. May play a role in hematopoiesis. The chain is Protein YIPF3 (Yipf3) from Mus musculus (Mouse).